The following is a 260-amino-acid chain: Ubiquinone/menaquinone biosynthesis C-methyltransferase UbiE (260 aa).

S-adenosyl-L-methionine-binding positions include threonine 83, aspartate 104, and 132–133 (NA).

This sequence belongs to the class I-like SAM-binding methyltransferase superfamily. MenG/UbiE family.

The enzyme catalyses a 2-demethylmenaquinol + S-adenosyl-L-methionine = a menaquinol + S-adenosyl-L-homocysteine + H(+). It carries out the reaction a 2-methoxy-6-(all-trans-polyprenyl)benzene-1,4-diol + S-adenosyl-L-methionine = a 5-methoxy-2-methyl-3-(all-trans-polyprenyl)benzene-1,4-diol + S-adenosyl-L-homocysteine + H(+). Its pathway is quinol/quinone metabolism; menaquinone biosynthesis; menaquinol from 1,4-dihydroxy-2-naphthoate: step 2/2. The protein operates within cofactor biosynthesis; ubiquinone biosynthesis. Functionally, methyltransferase required for the conversion of demethylmenaquinol (DMKH2) to menaquinol (MKH2) and the conversion of 2-polyprenyl-6-methoxy-1,4-benzoquinol (DDMQH2) to 2-polyprenyl-3-methyl-6-methoxy-1,4-benzoquinol (DMQH2). This is Ubiquinone/menaquinone biosynthesis C-methyltransferase UbiE from Bartonella tribocorum (strain CIP 105476 / IBS 506).